A 249-amino-acid chain; its full sequence is DNA polymerase sliding clamp 1 (249 aa).

The protein belongs to the PCNA family. In terms of assembly, homotrimer. The subunits circularize to form a toroid; DNA passes through its center. Replication factor C (RFC) is required to load the toroid on the DNA.

Its function is as follows. Sliding clamp subunit that acts as a moving platform for DNA processing. Responsible for tethering the catalytic subunit of DNA polymerase and other proteins to DNA during high-speed replication. The protein is DNA polymerase sliding clamp 1 of Pyrobaculum aerophilum (strain ATCC 51768 / DSM 7523 / JCM 9630 / CIP 104966 / NBRC 100827 / IM2).